The following is a 210-amino-acid chain: Na(+)-translocating NADH-quinone reductase subunit D (210 aa).

A run of 5 helical transmembrane segments spans residues 42–62 (FVMTLAVTFVTALSNFSVSLI), 72–92 (IIVQMAIIASLVIVVDQVLKA), 103–123 (VFVGLIITNCIVMGRAEAFAM), 131–151 (LIDGIGNGLGYGFVLITVGFF), and 178–198 (NGLMLLAPSAFFLIGFLIWVI).

The protein belongs to the NqrDE/RnfAE family. As to quaternary structure, composed of six subunits; NqrA, NqrB, NqrC, NqrD, NqrE and NqrF.

The protein localises to the cell inner membrane. It catalyses the reaction a ubiquinone + n Na(+)(in) + NADH + H(+) = a ubiquinol + n Na(+)(out) + NAD(+). This reaction is tightly coupled to the Na(+) pumping activity and specifically requires Na(+) for activity. Inhibited by korormicin and 2-N-heptyl-4-hydroxyquinoline N-oxide (HQNO). Its function is as follows. NQR complex catalyzes the reduction of ubiquinone-1 to ubiquinol by two successive reactions, coupled with the transport of Na(+) ions from the cytoplasm to the periplasm. NqrA to NqrE are probably involved in the second step, the conversion of ubisemiquinone to ubiquinol. This is Na(+)-translocating NADH-quinone reductase subunit D from Vibrio alginolyticus.